Consider the following 117-residue polypeptide: Ribosome-binding factor A (117 aa).

Belongs to the RbfA family. In terms of assembly, monomer. Binds 30S ribosomal subunits, but not 50S ribosomal subunits or 70S ribosomes.

The protein localises to the cytoplasm. In terms of biological role, one of several proteins that assist in the late maturation steps of the functional core of the 30S ribosomal subunit. Associates with free 30S ribosomal subunits (but not with 30S subunits that are part of 70S ribosomes or polysomes). Required for efficient processing of 16S rRNA. May interact with the 5'-terminal helix region of 16S rRNA. In Lacticaseibacillus casei (strain BL23) (Lactobacillus casei), this protein is Ribosome-binding factor A.